Consider the following 451-residue polypeptide: Bifunctional protein GlmU (451 aa).

A pyrophosphorylase region spans residues 1-225 (MVVVAILAAG…YQEILGINDR (225 aa)). Residues 7–10 (LAAG), lysine 21, glutamine 72, and 77–78 (GT) contribute to the UDP-N-acetyl-alpha-D-glucosamine site. Aspartate 102 is a binding site for Mg(2+). 4 residues coordinate UDP-N-acetyl-alpha-D-glucosamine: glycine 139, glutamate 154, asparagine 169, and asparagine 223. Asparagine 223 contacts Mg(2+). A linker region spans residues 226-246 (LQLATAYEILQRRVKEQWMMA). The N-acetyltransferase stretch occupies residues 247–451 (GVTLIDPNSI…PGWRKKSGES (205 aa)). UDP-N-acetyl-alpha-D-glucosamine is bound by residues arginine 328 and lysine 346. Histidine 358 acts as the Proton acceptor in catalysis. Residues tyrosine 361 and asparagine 372 each contribute to the UDP-N-acetyl-alpha-D-glucosamine site. Residues alanine 375, 381–382 (NY), serine 400, alanine 418, and arginine 435 contribute to the acetyl-CoA site.

In the N-terminal section; belongs to the N-acetylglucosamine-1-phosphate uridyltransferase family. This sequence in the C-terminal section; belongs to the transferase hexapeptide repeat family. As to quaternary structure, homotrimer. It depends on Mg(2+) as a cofactor.

The protein localises to the cytoplasm. The catalysed reaction is alpha-D-glucosamine 1-phosphate + acetyl-CoA = N-acetyl-alpha-D-glucosamine 1-phosphate + CoA + H(+). The enzyme catalyses N-acetyl-alpha-D-glucosamine 1-phosphate + UTP + H(+) = UDP-N-acetyl-alpha-D-glucosamine + diphosphate. It functions in the pathway nucleotide-sugar biosynthesis; UDP-N-acetyl-alpha-D-glucosamine biosynthesis; N-acetyl-alpha-D-glucosamine 1-phosphate from alpha-D-glucosamine 6-phosphate (route II): step 2/2. It participates in nucleotide-sugar biosynthesis; UDP-N-acetyl-alpha-D-glucosamine biosynthesis; UDP-N-acetyl-alpha-D-glucosamine from N-acetyl-alpha-D-glucosamine 1-phosphate: step 1/1. The protein operates within bacterial outer membrane biogenesis; LPS lipid A biosynthesis. Functionally, catalyzes the last two sequential reactions in the de novo biosynthetic pathway for UDP-N-acetylglucosamine (UDP-GlcNAc). The C-terminal domain catalyzes the transfer of acetyl group from acetyl coenzyme A to glucosamine-1-phosphate (GlcN-1-P) to produce N-acetylglucosamine-1-phosphate (GlcNAc-1-P), which is converted into UDP-GlcNAc by the transfer of uridine 5-monophosphate (from uridine 5-triphosphate), a reaction catalyzed by the N-terminal domain. The protein is Bifunctional protein GlmU of Trichormus variabilis (strain ATCC 29413 / PCC 7937) (Anabaena variabilis).